A 162-amino-acid chain; its full sequence is NADH-quinone oxidoreductase subunit I (162 aa).

4Fe-4S ferredoxin-type domains lie at 54–83 and 93–122; these read RRYE…INST and SSYE…ETNI. Cys-63, Cys-66, Cys-69, Cys-73, Cys-102, Cys-105, Cys-108, and Cys-112 together coordinate [4Fe-4S] cluster.

It belongs to the complex I 23 kDa subunit family. In terms of assembly, NDH-1 is composed of 14 different subunits. Subunits NuoA, H, J, K, L, M, N constitute the membrane sector of the complex. Requires [4Fe-4S] cluster as cofactor.

It localises to the cell inner membrane. The enzyme catalyses a quinone + NADH + 5 H(+)(in) = a quinol + NAD(+) + 4 H(+)(out). Functionally, NDH-1 shuttles electrons from NADH, via FMN and iron-sulfur (Fe-S) centers, to quinones in the respiratory chain. The immediate electron acceptor for the enzyme in this species is believed to be ubiquinone. Couples the redox reaction to proton translocation (for every two electrons transferred, four hydrogen ions are translocated across the cytoplasmic membrane), and thus conserves the redox energy in a proton gradient. The protein is NADH-quinone oxidoreductase subunit I of Francisella tularensis subsp. holarctica (strain FTNF002-00 / FTA).